The sequence spans 20 residues: VATFTLPDLPYDYGALEPAV.

This sequence belongs to the iron/manganese superoxide dismutase family. Homotetramer. Requires Mn(2+) as cofactor.

It localises to the mitochondrion matrix. The catalysed reaction is 2 superoxide + 2 H(+) = H2O2 + O2. In terms of biological role, destroys superoxide anion radicals which are normally produced within the cells and which are toxic to biological systems. This is Superoxide dismutase [Mn], mitochondrial (SODA) from Hordeum vulgare (Barley).